Reading from the N-terminus, the 431-residue chain is Adenylosuccinate synthetase (431 aa).

Residues 13–19 (GDEGKGK) and 41–43 (GHT) contribute to the GTP site. The active-site Proton acceptor is the D14. Mg(2+) is bound by residues D14 and G41. IMP-binding positions include 14-17 (DEGK), 39-42 (NAGH), T130, R144, Q225, T240, and R304. Catalysis depends on H42, which acts as the Proton donor. Residue 300 to 306 (ATTGRKR) coordinates substrate. Residues R306, 332–334 (KLD), and 415–417 (STG) contribute to the GTP site.

Belongs to the adenylosuccinate synthetase family. In terms of assembly, homodimer. The cofactor is Mg(2+).

The protein localises to the cytoplasm. The catalysed reaction is IMP + L-aspartate + GTP = N(6)-(1,2-dicarboxyethyl)-AMP + GDP + phosphate + 2 H(+). It functions in the pathway purine metabolism; AMP biosynthesis via de novo pathway; AMP from IMP: step 1/2. Plays an important role in the de novo pathway of purine nucleotide biosynthesis. Catalyzes the first committed step in the biosynthesis of AMP from IMP. The protein is Adenylosuccinate synthetase of Shewanella piezotolerans (strain WP3 / JCM 13877).